The following is a 388-amino-acid chain: MAVHAHPDDEALWTGGLLAHLSRRGADVRVVTCTLGEQGEVIGEPMQGLIADEADMLGGFRYRELEDSLRILGVNGVHHRPCVLGGVGCWRDSGMVGTPSADHPRAFVKSGQQAVDALKALMSEFCPDIVVTYGPDGGYGHPDHIRAHEITHAAVAELPHTSAPELGGDNTDLFSAVLARRHGGRETSADHGIPDPVVLWAVRGETALKQAGRAISRIPDGWVAPSGMDFSFVDGAAGAVDSASSEKTPDKITEPDLAFVPDDLVDLAVQLSDADIEAQANAMAAHATQLWIADGRQSWTNPESAWAVSDPTVAPKVFALSNRIAQPLMREEHYVVAYGGSGPWAKTTPARYAYDSSVVRARGRSAFSLDQADEGAAHDTSEQSGQRR.

3 residues coordinate Zn(2+): histidine 6, aspartate 9, and histidine 144. The disordered stretch occupies residues 369-388; sequence LDQADEGAAHDTSEQSGQRR.

The protein belongs to the MshB deacetylase family. It depends on Zn(2+) as a cofactor.

The enzyme catalyses 1D-myo-inositol 2-acetamido-2-deoxy-alpha-D-glucopyranoside + H2O = 1D-myo-inositol 2-amino-2-deoxy-alpha-D-glucopyranoside + acetate. Catalyzes the deacetylation of 1D-myo-inositol 2-acetamido-2-deoxy-alpha-D-glucopyranoside (GlcNAc-Ins) in the mycothiol biosynthesis pathway. The chain is 1D-myo-inositol 2-acetamido-2-deoxy-alpha-D-glucopyranoside deacetylase from Corynebacterium kroppenstedtii (strain DSM 44385 / JCM 11950 / CIP 105744 / CCUG 35717).